Reading from the N-terminus, the 189-residue chain is Ribosome maturation factor RimM (189 aa).

Residues glutamate 96–glycine 169 form the PRC barrel domain. Residues leucine 170–serine 189 form a disordered region.

It belongs to the RimM family. As to quaternary structure, binds ribosomal protein uS19.

It is found in the cytoplasm. Its function is as follows. An accessory protein needed during the final step in the assembly of 30S ribosomal subunit, possibly for assembly of the head region. Essential for efficient processing of 16S rRNA. May be needed both before and after RbfA during the maturation of 16S rRNA. It has affinity for free ribosomal 30S subunits but not for 70S ribosomes. The chain is Ribosome maturation factor RimM from Brucella anthropi (strain ATCC 49188 / DSM 6882 / CCUG 24695 / JCM 21032 / LMG 3331 / NBRC 15819 / NCTC 12168 / Alc 37) (Ochrobactrum anthropi).